The chain runs to 588 residues: Phenol 2-monooxygenase fsqG (588 aa).

FAD is bound by residues 9-38 (DVLIIGAGPAGLTTANSFNGSNCRVRLIDW), 17-18 (PA), 37-39 (DWK), 45-50 (TGRADG), tyrosine 232, 289-299 (ARHNRIFLAGD), aspartate 299, and 309-313 (GQGMN). Positions 49 and 232 each coordinate substrate.

It belongs to the PheA/TfdB FAD monooxygenase family. In terms of assembly, homodimer. FAD serves as cofactor.

It participates in secondary metabolite biosynthesis. Its function is as follows. Phenol 2-monooxygenase; part of the gene cluster that mediates the biosynthesis of the isoquinoline alkaloids fumisoquin A, fumisoquin B and fumisoquin C; as well as small amounts of fumipyrrole as a shunt metabolite. The products of the cluster lead to a brown coloration and are important for growth and conidiation. The nonribosomal peptide synthetase-like protein fsqF, which lacks a canonical condensation domain, is required for addition of a serine-derived dehydroalanine moiety to activated tyrosine but is not essential for the subsequent steps leading to isoquinoline formation. A different enzyme, most likely the ATP-grasp enzyme fsqD, is responsible for activation of tyrosine. Three additional enzymes encoded by the fsq cluster, the N-methyltransferase fsqC, the phenol 2-monooxygenase fsqG and the FAD-dependent oxidase fsqB, catalyze the formation of the isoquinoline ring system in the fumisoquins. FsqB converts the fspF thiolation domain-bound (2S,4S,5S)-2-amino-6-(3,4-dihydroxyphenyl)-4-hydroxy-5-(methylamino)hexanoyl into isoquinoline. The cyclization most likely proceeds via a two-step mechanism, beginning with FAD-dependent oxidation of the methyl group to an iminium species followed by electrophilic attack on the deprotonated phenol. The sequence is that of Phenol 2-monooxygenase fsqG from Aspergillus fumigatus (strain ATCC MYA-4609 / CBS 101355 / FGSC A1100 / Af293) (Neosartorya fumigata).